The primary structure comprises 181 residues: Peptide deformylase 1 (181 aa).

Fe cation contacts are provided by Cys-106 and His-148. Glu-149 is an active-site residue. Position 152 (His-152) interacts with Fe cation.

This sequence belongs to the polypeptide deformylase family. It depends on Fe(2+) as a cofactor.

The enzyme catalyses N-terminal N-formyl-L-methionyl-[peptide] + H2O = N-terminal L-methionyl-[peptide] + formate. In terms of biological role, removes the formyl group from the N-terminal Met of newly synthesized proteins. Requires at least a dipeptide for an efficient rate of reaction. N-terminal L-methionine is a prerequisite for activity but the enzyme has broad specificity at other positions. The chain is Peptide deformylase 1 from Burkholderia multivorans (strain ATCC 17616 / 249).